Here is a 498-residue protein sequence, read N- to C-terminus: MASQGTKRSYEQMETDGERQNATEIRASVGKMIGGIGRFYIQMCTELKLSDYEGRLIQNSLTIERMVLSAFDERRNKYLEEHPSAGKDPKKTGGPIYRRVNGKWMRELILYDKEEIRRIWRQANNGDDATAGLTHMMIWHSNLNDATYQRTRALVRTGMDPRMCSLMQGSTLPRRSGAAGAAVKGVGTMVMELVRMIKRGINDRNFWRGENGRKTRIAYERMCNILKGKFQTAAQKAMMDQVRESRNPGNAEFEDLTFLARSALILRGSVAHKSCLPACVYGPAVASGYDFEREGYSLVGIDPFRLLQNSQVYSLIRPNENPAHKSQLVWMACHSAAFEDLRVLSFIKGTKVLPRGKLSTRGVQIASNENMETMESSTLELRSRYWAIRTRSGGNTNQQRASAGQISIQPTFSVQRNLPFDRTTIMAAFNGNTEGRTSDMRTEIIRMMESARPEDVSFQGRGVFELSDEKAASPIVPSFDMSNEGSYFFGDNAEEYDN.

A Unconventional nuclear localization signal motif is present at residues 1–18 (MASQGTKRSYEQMETDGE). A disordered region spans residues 1–21 (MASQGTKRSYEQMETDGERQN). Over residues 8 to 21 (RSYEQMETDGERQN) the composition is skewed to basic and acidic residues. The short motif at 198–216 (KRGINDRNFWRGENGRKTR) is the Bipartite nuclear localization signal element.

It belongs to the influenza viruses nucleoprotein family. As to quaternary structure, homomultimerizes to form the nucleocapsid. May bind host exportin-1/XPO1. Binds to viral genomic RNA. Protein-RNA contacts are mediated by a combination of electrostatic interactions between positively charged residues and the phosphate backbone and planar interactions between aromatic side chains and bases. Post-translationally, late in virus-infected cells, may be cleaved from a 56-kDa protein to a 53-kDa protein by a cellular caspase. This cleavage might be a marker for the onset of apoptosis in infected cells or have a specific function in virus host interaction.

The protein localises to the virion. Its subcellular location is the host nucleus. Functionally, encapsidates the negative strand viral RNA, protecting it from nucleases. The encapsidated genomic RNA is termed the ribonucleoprotein (RNP) and serves as template for transcription and replication. The RNP needs to be localized in the host nucleus to start an infectious cycle, but is too large to diffuse through the nuclear pore complex. NP comprises at least 2 nuclear localization signals that are responsible for the active RNP import into the nucleus through cellular importin alpha/beta pathway. Later in the infection, nclear export of RNPs are mediated through viral proteins NEP interacting with M1 which binds nucleoproteins. It is possible that nucleoprotein binds directly host exportin-1/XPO1 and plays an active role in RNPs nuclear export. M1 interaction with RNP seems to hide nucleoprotein's nuclear localization signals. Soon after a virion infects a new cell, M1 dissociates from the RNP under acidification of the virion driven by M2 protein. Dissociation of M1 from RNP unmasks nucleoprotein's nuclear localization signals, targeting the RNP to the nucleus. The chain is Nucleoprotein from Aves (Human).